The chain runs to 541 residues: ATP synthase subunit beta (541 aa).

Residues 1-65 (MAKAVTSSKG…TPVKKEERAK (65 aa)) form a disordered region. Composition is skewed to basic and acidic residues over residues 25 to 36 (VKKDASKSKDAS) and 52 to 65 (AAKDTPVKKEERAK). 214-221 (GGAGVGKT) contributes to the ATP binding site.

Belongs to the ATPase alpha/beta chains family. In terms of assembly, F-type ATPases have 2 components, CF(1) - the catalytic core - and CF(0) - the membrane proton channel. CF(1) has five subunits: alpha(3), beta(3), gamma(1), delta(1), epsilon(1). CF(0) has three main subunits: a(1), b(2) and c(9-12). The alpha and beta chains form an alternating ring which encloses part of the gamma chain. CF(1) is attached to CF(0) by a central stalk formed by the gamma and epsilon chains, while a peripheral stalk is formed by the delta and b chains.

Its subcellular location is the cell inner membrane. It carries out the reaction ATP + H2O + 4 H(+)(in) = ADP + phosphate + 5 H(+)(out). Produces ATP from ADP in the presence of a proton gradient across the membrane. The catalytic sites are hosted primarily by the beta subunits. The protein is ATP synthase subunit beta of Bartonella tribocorum (strain CIP 105476 / IBS 506).